The sequence spans 413 residues: 3-oxo-tetronate kinase (413 aa).

Residues S254, 354-357, and G397 contribute to the ATP site; that span reads GGET.

Belongs to the four-carbon acid sugar kinase family.

It catalyses the reaction 3-dehydro-L-erythronate + ATP = 3-dehydro-4-O-phospho-L-erythronate + ADP + H(+). It carries out the reaction 3-dehydro-D-erythronate + ATP = 3-dehydro-4-O-phospho-D-erythronate + ADP + H(+). In terms of biological role, catalyzes the ATP-dependent phosphorylation of 3-oxo-tetronate to 3-oxo-tetronate 4-phosphate. This chain is 3-oxo-tetronate kinase, found in Haemophilus influenzae (strain ATCC 51907 / DSM 11121 / KW20 / Rd).